The chain runs to 209 residues: Large ribosomal subunit protein uL4 (209 aa).

Positions 46–71 are disordered; the sequence is GTSSTKTRSEVRGSSKKPWKQKGTGR. Residues 59–71 are compositionally biased toward basic residues; the sequence is SSKKPWKQKGTGR.

This sequence belongs to the universal ribosomal protein uL4 family. As to quaternary structure, part of the 50S ribosomal subunit.

One of the primary rRNA binding proteins, this protein initially binds near the 5'-end of the 23S rRNA. It is important during the early stages of 50S assembly. It makes multiple contacts with different domains of the 23S rRNA in the assembled 50S subunit and ribosome. In terms of biological role, forms part of the polypeptide exit tunnel. The polypeptide is Large ribosomal subunit protein uL4 (Borrelia garinii subsp. bavariensis (strain ATCC BAA-2496 / DSM 23469 / PBi) (Borreliella bavariensis)).